The following is a 158-amino-acid chain: ATP synthase subunit b', chloroplastic (158 aa).

The chain crosses the membrane as a helical span at residues 25 to 45; the sequence is ATLPLMALQFIILTTILNFIF.

Belongs to the ATPase B chain family. As to quaternary structure, F-type ATPases have 2 components, F(1) - the catalytic core - and F(0) - the membrane proton channel. F(1) has five subunits: alpha(3), beta(3), gamma(1), delta(1), epsilon(1). F(0) has four main subunits: a(1), b(1), b'(1) and c(10-14). The alpha and beta chains form an alternating ring which encloses part of the gamma chain. F(1) is attached to F(0) by a central stalk formed by the gamma and epsilon chains, while a peripheral stalk is formed by the delta, b and b' chains.

The protein localises to the plastid. It is found in the chloroplast thylakoid membrane. Its function is as follows. F(1)F(0) ATP synthase produces ATP from ADP in the presence of a proton or sodium gradient. F-type ATPases consist of two structural domains, F(1) containing the extramembraneous catalytic core and F(0) containing the membrane proton channel, linked together by a central stalk and a peripheral stalk. During catalysis, ATP synthesis in the catalytic domain of F(1) is coupled via a rotary mechanism of the central stalk subunits to proton translocation. Functionally, component of the F(0) channel, it forms part of the peripheral stalk, linking F(1) to F(0). The b'-subunit is a diverged and duplicated form of b found in plants and photosynthetic bacteria. This is ATP synthase subunit b', chloroplastic from Gracilaria tenuistipitata var. liui (Red alga).